The following is a 102-amino-acid chain: Small ribosomal subunit protein uS10 (102 aa).

This sequence belongs to the universal ribosomal protein uS10 family. Part of the 30S ribosomal subunit.

Its function is as follows. Involved in the binding of tRNA to the ribosomes. In Thermobifida fusca (strain YX), this protein is Small ribosomal subunit protein uS10.